The sequence spans 623 residues: Chaperone protein HtpG (623 aa).

The segment at 1 to 341 (MEKREFKAES…SQDLSLNISR (341 aa)) is a; substrate-binding. The tract at residues 342–549 (EMLQHDRQLS…EGEVSIEMEK (208 aa)) is b. The interval 550 to 623 (ILSAMPNNQG…FTNDICKLMK (74 aa)) is c.

It belongs to the heat shock protein 90 family. As to quaternary structure, homodimer.

The protein localises to the cytoplasm. Its function is as follows. Molecular chaperone. Has ATPase activity. This Clostridium perfringens (strain 13 / Type A) protein is Chaperone protein HtpG.